A 452-amino-acid polypeptide reads, in one-letter code: Phosphoglucosamine mutase (452 aa).

Serine 108 serves as the catalytic Phosphoserine intermediate. Positions 108, 247, 249, and 251 each coordinate Mg(2+). At serine 108 the chain carries Phosphoserine.

Belongs to the phosphohexose mutase family. Mg(2+) is required as a cofactor. In terms of processing, activated by phosphorylation.

It catalyses the reaction alpha-D-glucosamine 1-phosphate = D-glucosamine 6-phosphate. Catalyzes the conversion of glucosamine-6-phosphate to glucosamine-1-phosphate. In Burkholderia mallei (strain NCTC 10247), this protein is Phosphoglucosamine mutase.